Here is a 112-residue protein sequence, read N- to C-terminus: Putative transmembrane protein ORF112 (112 aa).

Transmembrane regions (helical) follow at residues 26-46 (FWEV…GILV), 50-70 (ILVT…MYLF), and 80-100 (IFFP…LVGV).

The protein resides in the host membrane. This is Putative transmembrane protein ORF112 from Acidianus convivator (ABV).